The sequence spans 430 residues: Small ribosomal subunit protein uS3m (430 aa).

The protein belongs to the universal ribosomal protein uS3 family.

The protein resides in the mitochondrion. The chain is Small ribosomal subunit protein uS3m (RPS3) from Marchantia polymorpha (Common liverwort).